The primary structure comprises 239 residues: 1-(5-phosphoribosyl)-5-[(5-phosphoribosylamino)methylideneamino] imidazole-4-carboxamide isomerase (239 aa).

Aspartate 8 serves as the catalytic Proton acceptor. The Proton donor role is filled by aspartate 129.

This sequence belongs to the HisA/HisF family.

The protein localises to the cytoplasm. It catalyses the reaction 1-(5-phospho-beta-D-ribosyl)-5-[(5-phospho-beta-D-ribosylamino)methylideneamino]imidazole-4-carboxamide = 5-[(5-phospho-1-deoxy-D-ribulos-1-ylimino)methylamino]-1-(5-phospho-beta-D-ribosyl)imidazole-4-carboxamide. It participates in amino-acid biosynthesis; L-histidine biosynthesis; L-histidine from 5-phospho-alpha-D-ribose 1-diphosphate: step 4/9. This Bacillus mycoides (strain KBAB4) (Bacillus weihenstephanensis) protein is 1-(5-phosphoribosyl)-5-[(5-phosphoribosylamino)methylideneamino] imidazole-4-carboxamide isomerase.